The primary structure comprises 256 residues: Hemin import ATP-binding protein HmuV (256 aa).

The ABC transporter domain maps to 2-238; the sequence is ISAQNLVYSL…QALTMLYGAD (237 aa). 34-41 provides a ligand contact to ATP; it reads GPNGAGKS.

It belongs to the ABC transporter superfamily. Heme (hemin) importer (TC 3.A.1.14.5) family. The complex is composed of two ATP-binding proteins (HmuV), two transmembrane proteins (HmuU) and a solute-binding protein (HmuT).

It localises to the cell inner membrane. Its function is as follows. Part of the ABC transporter complex HmuTUV involved in hemin import. Responsible for energy coupling to the transport system. The sequence is that of Hemin import ATP-binding protein HmuV from Escherichia coli O157:H7.